Reading from the N-terminus, the 361-residue chain is tRNA-specific 2-thiouridylase MnmA (361 aa).

ATP is bound by residues 11 to 18 and methionine 37; that span reads GMSGGVDS. Cysteine 106 (nucleophile) is an active-site residue. Cysteine 106 and cysteine 202 are disulfide-bonded. Position 130 (glycine 130) interacts with ATP. The segment at 152–154 is interaction with tRNA; that stretch reads KDQ. Cysteine 202 serves as the catalytic Cysteine persulfide intermediate. The tract at residues 308–309 is interaction with tRNA; sequence RY.

This sequence belongs to the MnmA/TRMU family.

It localises to the cytoplasm. It catalyses the reaction S-sulfanyl-L-cysteinyl-[protein] + uridine(34) in tRNA + AH2 + ATP = 2-thiouridine(34) in tRNA + L-cysteinyl-[protein] + A + AMP + diphosphate + H(+). Its function is as follows. Catalyzes the 2-thiolation of uridine at the wobble position (U34) of tRNA, leading to the formation of s(2)U34. This is tRNA-specific 2-thiouridylase MnmA from Clostridium botulinum (strain Alaska E43 / Type E3).